A 174-amino-acid polypeptide reads, in one-letter code: Large ribosomal subunit protein uL10 (174 aa).

This sequence belongs to the universal ribosomal protein uL10 family. Part of the ribosomal stalk of the 50S ribosomal subunit. The N-terminus interacts with L11 and the large rRNA to form the base of the stalk. The C-terminus forms an elongated spine to which L12 dimers bind in a sequential fashion forming a multimeric L10(L12)X complex.

In terms of biological role, forms part of the ribosomal stalk, playing a central role in the interaction of the ribosome with GTP-bound translation factors. In Geobacter sulfurreducens (strain ATCC 51573 / DSM 12127 / PCA), this protein is Large ribosomal subunit protein uL10.